Consider the following 168-residue polypeptide: Group 2 truncated hemoglobin 3-1 (168 aa).

Residue histidine 98 coordinates heme b.

The protein belongs to the truncated hemoglobin family. Group II subfamily. In terms of assembly, homodimer when ferric. In terms of tissue distribution, mainly expressed in root nodules, but barely in leaves, roots, stems, flowers and fruits.

In terms of biological role, hemoglobin-like protein that exhibits an unusual concentration-independent binding of O(2) and CO. Required for general plant development and during nodulation. May promote shoot organogenesis from root explants. The sequence is that of Group 2 truncated hemoglobin 3-1 from Lotus japonicus (Lotus corniculatus var. japonicus).